The sequence spans 340 residues: tRNA N6-adenosine threonylcarbamoyltransferase (340 aa).

Fe cation-binding residues include His-111 and His-115. Residues 134–138 (IISGA), Asp-167, Gly-180, and Asn-273 contribute to the substrate site. A Fe cation-binding site is contributed by Asp-301.

This sequence belongs to the KAE1 / TsaD family. Fe(2+) serves as cofactor.

It localises to the cytoplasm. The catalysed reaction is L-threonylcarbamoyladenylate + adenosine(37) in tRNA = N(6)-L-threonylcarbamoyladenosine(37) in tRNA + AMP + H(+). In terms of biological role, required for the formation of a threonylcarbamoyl group on adenosine at position 37 (t(6)A37) in tRNAs that read codons beginning with adenine. Is involved in the transfer of the threonylcarbamoyl moiety of threonylcarbamoyl-AMP (TC-AMP) to the N6 group of A37, together with TsaE and TsaB. TsaD likely plays a direct catalytic role in this reaction. In Wigglesworthia glossinidia brevipalpis, this protein is tRNA N6-adenosine threonylcarbamoyltransferase.